The chain runs to 275 residues: Large ribosomal subunit protein uL2c (275 aa).

2 disordered regions span residues 1–30 (MAIH…QKQK) and 225–275 (MNPV…RRRK). Polar residues predominate over residues 21–30 (QAKSTPQKQK).

The protein belongs to the universal ribosomal protein uL2 family. Part of the 50S ribosomal subunit.

It is found in the plastid. The protein localises to the chloroplast. The sequence is that of Large ribosomal subunit protein uL2c (rpl2) from Illicium oligandrum (Star anise).